A 60-amino-acid polypeptide reads, in one-letter code: Defensin-like protein 4 (60 aa).

4 disulfide bridges follow: Cys4/Cys56, Cys17/Cys41, Cys26/Cys51, and Cys30/Cys53.

Belongs to the DEFL family. Protease inhibitor I18 (RTI/MTI-2) subfamily.

It localises to the secreted. Functionally, inhibits trypsin and chymotrypsin. The protein is Defensin-like protein 4 of Brassica napus (Rape).